The primary structure comprises 155 residues: MSQVILDLQLACEDNSGLPEESQFQTWLNAVIPQFQEESEVTIRVVDTAESHSLNLTYRGKDKPTNVLSFPFEVPPGMEMSLLGDLVICRQVVEKEAQEQGKPLEAHWAHMVVHGSLHLLGYDHIEDDEAEEMEALETEIMLALGYEDPYIAEKE.

Positions 114, 118, and 124 each coordinate Zn(2+).

It belongs to the endoribonuclease YbeY family. Requires Zn(2+) as cofactor.

The protein resides in the cytoplasm. Its function is as follows. Single strand-specific metallo-endoribonuclease involved in late-stage 70S ribosome quality control and in maturation of the 3' terminus of the 16S rRNA. The chain is Endoribonuclease YbeY from Shigella flexneri serotype 5b (strain 8401).